Reading from the N-terminus, the 519-residue chain is Mannuronan C5-epimerase (519 aa).

Residues 1-25 form the signal peptide; sequence MNLHPHLRHSLLASALLLASGLATA. 6 PbH1 repeats span residues 219–246, 281–303, 305–328, 330–352, 354–376, and 377–399; these read GTET…SISQ, TQDF…DPHD, SHRL…IVSR, VNDS…VIDR, SVNN…TLYE, and SGDN…RVRN. His302 serves as the catalytic Proton acceptor.

This sequence belongs to the D-mannuronate C5-epimerase family.

It localises to the periplasm. It catalyses the reaction [(1-&gt;4)-beta-D-mannuronosyl](n) = [alginate](n). Its pathway is glycan biosynthesis; alginate biosynthesis. Its function is as follows. Catalyzes the epimerization of beta-D-mannuronate to alpha-L-guluronate during the synthesis of the linear polysaccharide alginate. In addition, is part of a periplasmic protein complex that protects alginate from degradation by AlgL by channeling the newly formed alginate polymer through a scaffold that transfers the alginate polymer through the periplasmic space to the outer membrane secretin AlgE. The sequence is that of Mannuronan C5-epimerase (algG) from Pseudomonas putida (strain ATCC 47054 / DSM 6125 / CFBP 8728 / NCIMB 11950 / KT2440).